A 114-amino-acid polypeptide reads, in one-letter code: Iron-sulfur cluster insertion protein ErpA (114 aa).

The iron-sulfur cluster site is built by Cys42, Cys106, and Cys108.

It belongs to the HesB/IscA family. As to quaternary structure, homodimer. Iron-sulfur cluster serves as cofactor.

Its function is as follows. Required for insertion of 4Fe-4S clusters for at least IspG. The sequence is that of Iron-sulfur cluster insertion protein ErpA from Citrobacter koseri (strain ATCC BAA-895 / CDC 4225-83 / SGSC4696).